Consider the following 148-residue polypeptide: uncharacterized protein (148 aa).

The next 3 helical transmembrane spans lie at Tyr-20–Tyr-42, Tyr-52–Tyr-74, and Ile-118–Ile-135.

Its subcellular location is the cell membrane. This is an uncharacterized protein from Rickettsia prowazekii (strain Madrid E).